An 839-amino-acid polypeptide reads, in one-letter code: Periplasmic nitrate reductase (839 aa).

Positions Met1–Ala34 form a signal peptide, tat-type signal. The 4Fe-4S Mo/W bis-MGD-type domain occupies Ile46–Asp102. 4 residues coordinate [4Fe-4S] cluster: Cys53, Cys56, Cys60, and Cys88. Residues Lys90, Gln157, Asn182, Cys186, Trp219–Met226, Ser250–His254, Gln269–Asp271, Met379, Gln383, Asn489, Ser515–Asp516, Lys538, Asp565, and Thr729–Thr738 contribute to the Mo-bis(molybdopterin guanine dinucleotide) site. Position 805 (Phe805) interacts with substrate. The Mo-bis(molybdopterin guanine dinucleotide) site is built by Asn813 and Lys830.

This sequence belongs to the prokaryotic molybdopterin-containing oxidoreductase family. NasA/NapA/NarB subfamily. Component of the periplasmic nitrate reductase NapAB complex composed of NapA and NapB. It depends on [4Fe-4S] cluster as a cofactor. Requires Mo-bis(molybdopterin guanine dinucleotide) as cofactor. Predicted to be exported by the Tat system. The position of the signal peptide cleavage has not been experimentally proven.

The protein localises to the periplasm. It catalyses the reaction 2 Fe(II)-[cytochrome] + nitrate + 2 H(+) = 2 Fe(III)-[cytochrome] + nitrite + H2O. Its function is as follows. Catalytic subunit of the periplasmic nitrate reductase complex NapAB. Receives electrons from NapB and catalyzes the reduction of nitrate to nitrite. The chain is Periplasmic nitrate reductase from Laribacter hongkongensis (strain HLHK9).